The sequence spans 324 residues: tRNA-dihydrouridine(20a/20b) synthase [NAD(P)+]-like (324 aa).

FMN contacts are provided by residues 33-35 (PMV) and Gln87. The active-site Proton donor is Cys116. Residues Lys158, His186, 216 to 218 (NGD), and 240 to 241 (AR) contribute to the FMN site.

It belongs to the Dus family. Dus4 subfamily. FMN serves as cofactor.

It carries out the reaction 5,6-dihydrouridine(20a) in tRNA + NADP(+) = uridine(20a) in tRNA + NADPH + H(+). It catalyses the reaction 5,6-dihydrouridine(20a) in tRNA + NAD(+) = uridine(20a) in tRNA + NADH + H(+). The catalysed reaction is 5,6-dihydrouridine(20b) in tRNA + NAD(+) = uridine(20b) in tRNA + NADH + H(+). The enzyme catalyses 5,6-dihydrouridine(20b) in tRNA + NADP(+) = uridine(20b) in tRNA + NADPH + H(+). Its function is as follows. Catalyzes the synthesis of dihydrouridine, a modified base found in the D-loop of most tRNAs. This chain is tRNA-dihydrouridine(20a/20b) synthase [NAD(P)+]-like (Dus4l), found in Mus musculus (Mouse).